Here is a 186-residue protein sequence, read N- to C-terminus: EF-hand protein 5 (186 aa).

A disordered region spans residues Met1–Gly23. EF-hand domains follow at residues Ser41–Thr76, Ser77–Glu112, Ala113–His148, and Ser149–Met186. 3 residues coordinate Ca(2+): Glu98, Asp126, and Thr130.

The sequence is that of EF-hand protein 5 from Leishmania tarentolae (Sauroleishmania tarentolae).